An 859-amino-acid chain; its full sequence is Chitin synthase 1 (859 aa).

The tract at residues 1-22 (MRRWFKKTLPRPPDEEESAGLT) is disordered. Transmembrane regions (helical) follow at residues 544–564 (LATI…FYIL), 615–635 (MVIM…WIAY), 662–682 (FINI…VSII), 793–813 (YVVL…LSIP), and 833–853 (LWSV…YLFI).

It belongs to the chitin synthase family.

The protein resides in the cell membrane. It carries out the reaction [(1-&gt;4)-N-acetyl-beta-D-glucosaminyl](n) + UDP-N-acetyl-alpha-D-glucosamine = [(1-&gt;4)-N-acetyl-beta-D-glucosaminyl](n+1) + UDP + H(+). Its function is as follows. Polymerizes chitin, a structural polymer of the cell wall and septum, by transferring the sugar moiety of UDP-GlcNAc to the non-reducing end of the growing chitin polymer. This chain is Chitin synthase 1 (chs1), found in Schizosaccharomyces pombe (strain 972 / ATCC 24843) (Fission yeast).